A 266-amino-acid polypeptide reads, in one-letter code: Gap junction beta-4 protein (266 aa).

Residues 2–13 lie within the membrane without spanning it; it reads NWGFLQGILSGV. The Cytoplasmic portion of the chain corresponds to 14–20; sequence NKYSTAL. Residues 21 to 40 form a helical membrane-spanning segment; sequence GRIWLSVVFIFRVLVYVVAA. Residues 41 to 73 lie on the Extracellular side of the membrane; that stretch reads EEVWDDDQKDFICNTKQPGCPNVCYDEFFPVSH. Disulfide bonds link C53–C175, C60–C169, and C64–C164. The helical transmembrane segment at 74 to 94 threads the bilayer; sequence VRLWALQLILVTCPSLLVVMH. The Cytoplasmic segment spans residues 95–130; it reads VAYREERERKHRLKHGPNAPALYSNLSKKRGGLWWT. A helical membrane pass occupies residues 131–151; that stretch reads YLLSLIFKAAVDSGFLYIFHC. The Extracellular segment spans residues 152 to 184; that stretch reads IYKDYDMPRVVACSVTPCPHTVDCYIARPTEKK. The helical transmembrane segment at 185 to 205 threads the bilayer; the sequence is VFTYFMVVTAAICILLNLSEV. Topologically, residues 206–266 are cytoplasmic; the sequence is VYLVGKRCME…MATVDAGVYP (61 aa).

The protein belongs to the connexin family. Beta-type (group I) subfamily. As to quaternary structure, a hemichannel or connexon is composed of a hexamer of connexins. A functional gap junction is formed by the apposition of two hemichannels. Forms heteromeric channels with GJB2. Detected in cochlea (at protein level). Detected in cochlea. Expressed in skin.

Its subcellular location is the cell membrane. It localises to the cell junction. The protein resides in the gap junction. Functionally, structural component of gap junctions. Gap junctions are dodecameric channels that connect the cytoplasm of adjoining cells. They are formed by the docking of two hexameric hemichannels, one from each cell membrane. Small molecules and ions diffuse from one cell to a neighboring cell via the central pore. This chain is Gap junction beta-4 protein (Gjb4), found in Mus musculus (Mouse).